Reading from the N-terminus, the 683-residue chain is Methionine--tRNA ligase (683 aa).

The 'HIGH' region signature appears at 23–33 (PYANGSAHIGH). Residues cysteine 154, cysteine 157, cysteine 166, and cysteine 170 each contribute to the Zn(2+) site. The 'KMSKS' region signature appears at 335–339 (KFSKS). ATP is bound at residue lysine 338. The region spanning 583–683 (DFAKMELRVG…KPSEPGTKVR (101 aa)) is the tRNA-binding domain.

Belongs to the class-I aminoacyl-tRNA synthetase family. MetG type 1 subfamily. As to quaternary structure, homodimer. The cofactor is Zn(2+).

The protein resides in the cytoplasm. It catalyses the reaction tRNA(Met) + L-methionine + ATP = L-methionyl-tRNA(Met) + AMP + diphosphate. In terms of biological role, is required not only for elongation of protein synthesis but also for the initiation of all mRNA translation through initiator tRNA(fMet) aminoacylation. This chain is Methionine--tRNA ligase, found in Methanocella arvoryzae (strain DSM 22066 / NBRC 105507 / MRE50).